Consider the following 147-residue polypeptide: uncharacterized protein (147 aa).

Residues 51–72 (VTSSMSVMNDSEECPLINGPSM) are disordered.

This is an uncharacterized protein from Gallid herpesvirus 2 (strain GA) (GaHV-2).